The chain runs to 623 residues: Immunity-related GTPase family Q protein (623 aa).

Residues C152 and C158 are joined by a disulfide bond. The stretch at S155–P180 forms a coiled coil. The LIR 1 motif lies at F186 to L189. T203 is subject to Phosphothreonine. The region spanning A223–A449 is the IRG-type G domain. The disordered stretch occupies residues E334–G393. Residues G342–S353 are compositionally biased toward basic and acidic residues. Positions W421 to L424 match the LIR 2 motif.

Belongs to the TRAFAC class dynamin-like GTPase superfamily. IRG family. Interacts (via LIR motif 1) with GABARAPL2. Interacts (via LIR motif 2) with MAP1LC3B/LC3B.

The protein resides in the lysosome. It is found in the cytoplasmic vesicle. Its subcellular location is the autophagosome. Functionally, autophagy receptor that specifically promotes clearance of misfolded MHC class I molecules by targeting them to the lysosome for degradation. Acts as a molecular adapter that specifically recognizes and binds (1) misfolded MHC class I molecules following their ubiquitination, as well as (2) autophagy-related proteins, promoting the recruitment of misfolded MHC class I molecules to autophagy machinery for degradation. Degradation of misfolded MHC class I molecules is essential to prevent accumulation of defective MHC class I complexes at the surface of CD8(+) T-cells and prevent a stronger T-cell-mediated response. In contrast to other members of the family, does not show GTPase activity. The chain is Immunity-related GTPase family Q protein from Homo sapiens (Human).